Reading from the N-terminus, the 264-residue chain is Endonuclease V (264 aa).

Mg(2+) contacts are provided by Asp-72 and Asp-137.

This sequence belongs to the endonuclease V family. The cofactor is Mg(2+).

Its subcellular location is the cytoplasm. It catalyses the reaction Endonucleolytic cleavage at apurinic or apyrimidinic sites to products with a 5'-phosphate.. Functionally, DNA repair enzyme involved in the repair of deaminated bases. Selectively cleaves double-stranded DNA at the second phosphodiester bond 3' to a deoxyinosine leaving behind the intact lesion on the nicked DNA. The sequence is that of Endonuclease V from Halobacterium salinarum (strain ATCC 700922 / JCM 11081 / NRC-1) (Halobacterium halobium).